We begin with the raw amino-acid sequence, 309 residues long: Probable RuBisCO transcriptional regulator (309 aa).

The region spanning 5-62 (FTLQQLRILKAIATEKSFTRAAEVLFVSQPSLSKQIKTLESRLNISLLNRENNIVSLT) is the HTH lysR-type domain. The segment at residues 22 to 41 (FTRAAEVLFVSQPSLSKQIK) is a DNA-binding region (H-T-H motif).

It belongs to the LysR transcriptional regulatory family.

It localises to the plastid. Its subcellular location is the chloroplast. Its function is as follows. Trans-acting transcriptional regulator of RuBisCO genes (rbcL and rbcS) expression. The protein is Probable RuBisCO transcriptional regulator (rbcR) of Trieres chinensis (Marine centric diatom).